A 527-amino-acid chain; its full sequence is GMP synthase [glutamine-hydrolyzing] (527 aa).

A Glutamine amidotransferase type-1 domain is found at 13–202; it reads TILVLDFGSQ…AVDICGAAQK (190 aa). The Nucleophile role is filled by cysteine 89. Active-site residues include histidine 176 and glutamate 178. One can recognise a GMPS ATP-PPase domain in the interval 203-402; it reads WSMENFVDTE…MGIPHDLVWR (200 aa). 231 to 237 is a binding site for ATP; it reads SGGVDST. Residues arginine 304, aspartate 464, lysine 519, and glutamate 525 each contribute to the XMP site.

In terms of assembly, homodimer. Mg(2+) is required as a cofactor.

It localises to the cytoplasm. The protein resides in the cytosol. It carries out the reaction XMP + L-glutamine + ATP + H2O = GMP + L-glutamate + AMP + diphosphate + 2 H(+). The protein operates within purine metabolism; GMP biosynthesis; GMP from XMP (L-Gln route): step 1/1. Functionally, catalyzes the conversion of xanthine monophosphate (XMP) to GMP in the presence of glutamine and ATP through an adenyl-XMP intermediate. This Yarrowia lipolytica (strain CLIB 122 / E 150) (Yeast) protein is GMP synthase [glutamine-hydrolyzing] (GUA1).